Consider the following 1663-residue polypeptide: Cortactin-binding protein 2 (1663 aa).

4 disordered regions span residues 1-23, 203-222, 358-440, and 454-479; these read MATDGASCEPDLSRAPEDAAGAA, KKKTNELEEELSAEKRRSTE, RQAS…LHPG, and GNANDPDQNGNTTQSPPSRDMSPTSR. Residues 119-276 adopt a coiled-coil conformation; sequence KKMQERMSAQ…EQLKRGSDSK (158 aa). Residues 386-396 are compositionally biased toward low complexity; the sequence is PSTDSTPDPTS. The segment covering 411-422 has biased composition (polar residues); it reads QTPGIAPQNSQA. Arg498 bears the Asymmetric dimethylarginine mark. The segment at 499–616 is disordered; the sequence is FTSPQAGAPS…SSPQLPPKPS (118 aa). The span at 583–593 shows a compositional bias: polar residues; that stretch reads TVASPPSSLPQ. 6 ANK repeats span residues 709 to 739, 743 to 772, 776 to 805, 809 to 838, 842 to 871, and 912 to 942; these read GRPTLLQQAAAQGNVTLLSMLLNEEGLDINY, DGHSALYSAAKNGHTDCVRLLLSAEAQINA, NGFTPLCAAAAQGHFECVELLIAYDANINH, GGQTPLYLACKNENKECIKLLLEAGTNRSV, DGWTPVHAAVDTGNVDSLKLLMYHRIPACG, and EGWTAAHIAASKGFKNCLEILCRHGGLEPER. A disordered region spans residues 1446 to 1477; it reads NKKKGESGAWRKVNTSPRRKSGRFSLPTWNKP. The residue at position 1524 (Ser1524) is a Phosphoserine. Disordered regions lie at residues 1580-1602 and 1618-1663; these read SQKEVSPLSSHQTTECSNSKSKT and SKVT…KPNK. The span at 1582–1599 shows a compositional bias: polar residues; the sequence is KEVSPLSSHQTTECSNSK. The span at 1624-1638 shows a compositional bias: low complexity; the sequence is SQNTKRSSSSSNTRQ. Residues 1645 to 1663 are compositionally biased toward basic and acidic residues; the sequence is SKKENWNLHKNEHLDKPNK.

Interacts with CTTN/cortactin SH3 domain. Interacts with STRN, STRN4/zinedin and MOB4/phocein; this interactions mediate the association with the STRIPAK core complex and may regulate dendritic spine distribution of the STRIPAK complex in hippocampal neurons. Activation of glutamate receptors weakens the interaction with STRN and STRN4.

It is found in the cytoplasm. The protein localises to the cell cortex. The protein resides in the cell projection. Its subcellular location is the dendritic spine. Regulates the dendritic spine distribution of CTTN/cortactin in hippocampal neurons, and thus controls dendritic spinogenesis and dendritic spine maintenance. Associates with the striatin-interacting phosphatase and kinase (STRIPAK) core complex to regulate dendritic spine distribution of the STRIPAK complex in hippocampal neurons. The chain is Cortactin-binding protein 2 (CTTNBP2) from Colobus guereza (Mantled guereza).